The following is a 415-amino-acid chain: Probable glucuronosyltransferase Os01g0926600 (415 aa).

Over 1–4 the chain is Cytoplasmic; the sequence is MAMR. The helical; Signal-anchor for type II membrane protein transmembrane segment at 5-25 threads the bilayer; that stretch reads LSSAAVALALLLAATALEDVA. The Lumenal segment spans residues 26 to 415; that stretch reads RGQDTERIEG…QGPVGDLKPW (390 aa). Asn142 and Asn403 each carry an N-linked (GlcNAc...) asparagine glycan.

The protein belongs to the glycosyltransferase 47 family.

It localises to the golgi apparatus membrane. In terms of biological role, involved in the synthesis of glucuronoxylan hemicellulose in secondary cell walls. The polypeptide is Probable glucuronosyltransferase Os01g0926600 (Oryza sativa subsp. japonica (Rice)).